Here is a 230-residue protein sequence, read N- to C-terminus: MTRKTIIVGVSGASCSGKSTLCQLLHAIFEGSSLVHEDDFYKTDAEIPVKNGIADWDCQESLNLDAFLENLHYIRDHGVLPTHLRNRENKNVAPEALIEYADIIKEFKAPAIPTLEQHLVFVDGFMMYVNEDLINAFDIRLMLVTDFDTLKRRREARTGYITLEGFWQDPPHYFENYVWPGYVHGHSHLFVNGDVTGKLLDKRIQLSPSSKMSVRDNVQWAINSILNALQ.

Residue 12-20 (GASCSGKST) participates in ATP binding. Mg(2+) contacts are provided by Ser19 and Asp38. Asp38 (proton acceptor) is an active-site residue. Substrate contacts are provided by residues 38 to 41 (DDFY) and 56 to 57 (WD). Residue Arg153 participates in ATP binding. Substrate is bound by residues Arg154 and 159–160 (GY). ATP-binding positions include 157-159 (RTG) and 203-205 (RIQ).

Belongs to the uridine kinase family. NRK subfamily.

The enzyme catalyses beta-nicotinamide D-riboside + ATP = beta-nicotinamide D-ribonucleotide + ADP + H(+). It carries out the reaction beta-D-ribosylnicotinate + ATP = nicotinate beta-D-ribonucleotide + ADP + H(+). The protein operates within cofactor biosynthesis; NAD(+) biosynthesis. Catalyzes the phosphorylation of nicotinamide riboside (NR) and nicotinic acid riboside (NaR) to form nicotinamide mononucleotide (NMN) and nicotinic acid mononucleotide (NaMN). The sequence is that of Nicotinamide riboside kinase (nrk1) from Schizosaccharomyces pombe (strain 972 / ATCC 24843) (Fission yeast).